The primary structure comprises 185 residues: Elongation factor P (185 aa).

This sequence belongs to the elongation factor P family.

It localises to the cytoplasm. The protein operates within protein biosynthesis; polypeptide chain elongation. In terms of biological role, involved in peptide bond synthesis. Stimulates efficient translation and peptide-bond synthesis on native or reconstituted 70S ribosomes in vitro. Probably functions indirectly by altering the affinity of the ribosome for aminoacyl-tRNA, thus increasing their reactivity as acceptors for peptidyl transferase. This chain is Elongation factor P, found in Thermoanaerobacter sp. (strain X514).